Consider the following 430-residue polypeptide: Serine/threonine transporter SstT (430 aa).

The next 9 membrane-spanning stretches (helical) occupy residues I24–I44, F47–V67, F82–L102, A144–M164, V186–V206, L223–F243, I294–M314, L320–A340, and F361–I381.

The protein belongs to the dicarboxylate/amino acid:cation symporter (DAACS) (TC 2.A.23) family.

The protein resides in the cell membrane. The catalysed reaction is L-serine(in) + Na(+)(in) = L-serine(out) + Na(+)(out). The enzyme catalyses L-threonine(in) + Na(+)(in) = L-threonine(out) + Na(+)(out). Involved in the import of serine and threonine into the cell, with the concomitant import of sodium (symport system). This Bifidobacterium adolescentis (strain ATCC 15703 / DSM 20083 / NCTC 11814 / E194a) protein is Serine/threonine transporter SstT.